The sequence spans 243 residues: Pyridoxine 5'-phosphate synthase (243 aa).

Asn-9 is a binding site for 3-amino-2-oxopropyl phosphate. Position 11-12 (11-12 (DH)) interacts with 1-deoxy-D-xylulose 5-phosphate. Arg-20 is a 3-amino-2-oxopropyl phosphate binding site. The Proton acceptor role is filled by His-45. Residues Arg-47 and His-52 each coordinate 1-deoxy-D-xylulose 5-phosphate. The Proton acceptor role is filled by Glu-72. Thr-102 provides a ligand contact to 1-deoxy-D-xylulose 5-phosphate. His-193 serves as the catalytic Proton donor. Residues Gly-194 and 215–216 (GH) contribute to the 3-amino-2-oxopropyl phosphate site.

It belongs to the PNP synthase family. As to quaternary structure, homooctamer; tetramer of dimers.

Its subcellular location is the cytoplasm. It catalyses the reaction 3-amino-2-oxopropyl phosphate + 1-deoxy-D-xylulose 5-phosphate = pyridoxine 5'-phosphate + phosphate + 2 H2O + H(+). It functions in the pathway cofactor biosynthesis; pyridoxine 5'-phosphate biosynthesis; pyridoxine 5'-phosphate from D-erythrose 4-phosphate: step 5/5. Its function is as follows. Catalyzes the complicated ring closure reaction between the two acyclic compounds 1-deoxy-D-xylulose-5-phosphate (DXP) and 3-amino-2-oxopropyl phosphate (1-amino-acetone-3-phosphate or AAP) to form pyridoxine 5'-phosphate (PNP) and inorganic phosphate. The chain is Pyridoxine 5'-phosphate synthase from Shigella dysenteriae serotype 1 (strain Sd197).